The sequence spans 120 residues: NADH dehydrogenase [ubiquinone] 1 subunit C2 (120 aa).

An N-acetylmethionine modification is found at Met-1. The helical transmembrane segment at 57–76 threads the bilayer; sequence GLHRQLLYITSFVFVGYYLL.

It belongs to the complex I NDUFC2 subunit family. In terms of assembly, complex I is composed of 45 different subunits. Interacts with TMEM242. There is a minor unacetylated form of subunit B14.5b.

It is found in the mitochondrion inner membrane. Its function is as follows. Accessory subunit of the mitochondrial membrane respiratory chain NADH dehydrogenase (Complex I), that is believed not to be involved in catalysis but required for the complex assembly. Complex I functions in the transfer of electrons from NADH to the respiratory chain. The immediate electron acceptor for the enzyme is believed to be ubiquinone. In Bos taurus (Bovine), this protein is NADH dehydrogenase [ubiquinone] 1 subunit C2.